Consider the following 476-residue polypeptide: Serine/threonine-protein kinase Chk1 (476 aa).

One can recognise a Protein kinase domain in the interval 9–265 (WDLVQTLGEG…IPDIKKDRWY (257 aa)). ATP is bound by residues 15–23 (LGEGAYGEV) and lysine 38. Aspartate 130 (proton acceptor) is an active-site residue. Residues 272-329 (GTKRGRVSSGGVTESPGALPKHIRSDTDFSPVKSALGEDKASYSTSQPEPGTGGALWD) are disordered. Serine 280 carries the post-translational modification Phosphoserine; by PKB/AKT1. Serine 296 carries the post-translational modification Phosphoserine. Serine 317 carries the phosphoserine; by ATM and ATR modification. Serine 345 bears the Phosphoserine mark. The tract at residues 391–476 (RSLRDVCEKM…STQKVWLPPP (86 aa)) is autoinhibitory region.

It belongs to the protein kinase superfamily. CAMK Ser/Thr protein kinase family. NIM1 subfamily. Post-translationally, phosphorylated by ATR in a RAD17-dependent manner in response to ultraviolet irradiation and inhibition of DNA replication. Phosphorylated by ATM in response to ionizing irradiation. Phosphorylation at Ser-345 induces a change in the conformation of the protein and activates the kinase activity. Phosphorylation at Ser-345 also increases binding to 14-3-3 proteins and promotes nuclear retention.

It is found in the nucleus. The protein resides in the chromosome. Its subcellular location is the cytoplasm. It localises to the cytoskeleton. The protein localises to the microtubule organizing center. It is found in the centrosome. It catalyses the reaction L-seryl-[protein] + ATP = O-phospho-L-seryl-[protein] + ADP + H(+). It carries out the reaction L-threonyl-[protein] + ATP = O-phospho-L-threonyl-[protein] + ADP + H(+). With respect to regulation, activated through phosphorylation by atr or atm in response to DNA damage or inhibition of DNA replication. In terms of biological role, serine/threonine-protein kinase which is required for checkpoint-mediated cell cycle arrest and activation of DNA repair in response to the presence of DNA damage or unreplicated DNA. May also negatively regulate cell cycle progression during unperturbed cell cycles. This regulation is achieved by a number of mechanisms that together help to preserve the integrity of the genome. Recognizes the substrate consensus sequence [R-X-X-S/T]. Binds to and phosphorylates CDC25A, CDC25B and CDC25C. This inhibits their activity through proteasomal degradation, nucleo-cytoplasmic shuttling and inhibition by proteins of the 13-3-3 family. Inhibition of CDC25 leads to increased inhibitory tyrosine phosphorylation of CDK-cyclin complexes and blocks cell cycle progression. May promote DNA repair, regulate chromatin assembly and the transcription of genes that regulate cell-cycle progression. May also play a role in replication fork maintenance. The polypeptide is Serine/threonine-protein kinase Chk1 (CHEK1) (Gallus gallus (Chicken)).